Reading from the N-terminus, the 610-residue chain is Elongation factor 4 (610 aa).

One can recognise a tr-type G domain in the interval 13-195 (SHIRNFSIVA…AIVNRLPAPK (183 aa)). Residues 25–30 (DHGKST) and 142–145 (NKID) each bind GTP.

Belongs to the TRAFAC class translation factor GTPase superfamily. Classic translation factor GTPase family. LepA subfamily.

It is found in the cell inner membrane. The catalysed reaction is GTP + H2O = GDP + phosphate + H(+). Functionally, required for accurate and efficient protein synthesis under certain stress conditions. May act as a fidelity factor of the translation reaction, by catalyzing a one-codon backward translocation of tRNAs on improperly translocated ribosomes. Back-translocation proceeds from a post-translocation (POST) complex to a pre-translocation (PRE) complex, thus giving elongation factor G a second chance to translocate the tRNAs correctly. Binds to ribosomes in a GTP-dependent manner. This Rhizobium leguminosarum bv. trifolii (strain WSM2304) protein is Elongation factor 4.